Consider the following 100-residue polypeptide: Urease subunit gamma (100 aa).

It belongs to the urease gamma subunit family. As to quaternary structure, heterotrimer of UreA (gamma), UreB (beta) and UreC (alpha) subunits. Three heterotrimers associate to form the active enzyme.

The protein resides in the cytoplasm. It carries out the reaction urea + 2 H2O + H(+) = hydrogencarbonate + 2 NH4(+). It participates in nitrogen metabolism; urea degradation; CO(2) and NH(3) from urea (urease route): step 1/1. The chain is Urease subunit gamma from Cupriavidus pinatubonensis (strain JMP 134 / LMG 1197) (Cupriavidus necator (strain JMP 134)).